Here is a 233-residue protein sequence, read N- to C-terminus: Purine nucleoside phosphorylase DeoD-type (233 aa).

H4 contributes to the a purine D-ribonucleoside binding site. Phosphate-binding positions include G20, R24, R43, and R87 to T90. Residues E179–E181 and S203–D204 each bind a purine D-ribonucleoside. D204 functions as the Proton donor in the catalytic mechanism.

The protein belongs to the PNP/UDP phosphorylase family. In terms of assembly, homohexamer; trimer of homodimers.

It catalyses the reaction a purine D-ribonucleoside + phosphate = a purine nucleobase + alpha-D-ribose 1-phosphate. The enzyme catalyses a purine 2'-deoxy-D-ribonucleoside + phosphate = a purine nucleobase + 2-deoxy-alpha-D-ribose 1-phosphate. Catalyzes the reversible phosphorolytic breakdown of the N-glycosidic bond in the beta-(deoxy)ribonucleoside molecules, with the formation of the corresponding free purine bases and pentose-1-phosphate. In Clostridium novyi (strain NT), this protein is Purine nucleoside phosphorylase DeoD-type.